The primary structure comprises 114 residues: Ig heavy chain V-A2 region BS-1 (114 aa).

Glutamine 1 is modified (pyrrolidone carboxylic acid). Residues 1–107 form the Ig-like domain; sequence QSVKESEGGL…YLGLMDVWGP (107 aa).

This Oryctolagus cuniculus (Rabbit) protein is Ig heavy chain V-A2 region BS-1.